Here is a 67-residue protein sequence, read N- to C-terminus: uncharacterized protein (67 aa).

A helical membrane pass occupies residues 26–46 (CYLLFCFLECFLNLFKKCGVF).

It belongs to the plectrovirus ORF11 family.

It is found in the host membrane. This is an uncharacterized protein from Spiroplasma virus SpV1-C74 (SpV1).